The sequence spans 305 residues: Superoxide dismutase [Fe] 2, chloroplastic (305 aa).

The transit peptide at 1 to 46 (MMNVAVTATPSSLLYSPLLLPSQGPNRRMQWKRNGKRRLGTKVAVS) directs the protein to the chloroplast. Fe cation contacts are provided by His77, His129, Asp228, and His232. The segment at 270–305 (AVQREQEGTETEDEENPDDEVPEVYLDSDIDVSEVD) is disordered. The span at 277-305 (GTETEDEENPDDEVPEVYLDSDIDVSEVD) shows a compositional bias: acidic residues.

It belongs to the iron/manganese superoxide dismutase family. Heterodimer with FSD3. Interacts with MRL7 and PRDA1. It depends on Fe cation as a cofactor.

Its subcellular location is the plastid. The protein resides in the chloroplast thylakoid. It carries out the reaction 2 superoxide + 2 H(+) = H2O2 + O2. With respect to regulation, activated by cpn20/cpn21 (in vitro). Its function is as follows. Destroys superoxide anion radicals which are normally produced within the cells and which are toxic to biological systems. Plays important role in chloroplast development, particularly in the maintenance of thylakoids membranes. Seems to act as a heterodimer with FSD3. The chain is Superoxide dismutase [Fe] 2, chloroplastic (FSD2) from Arabidopsis thaliana (Mouse-ear cress).